We begin with the raw amino-acid sequence, 391 residues long: Pyruvate dehydrogenase E1 component subunit alpha, testis-specific form, mitochondrial (391 aa).

The N-terminal 30 residues, 1-30, are a transit peptide targeting the mitochondrion; it reads MRKMLATVLSQVFSGMVQKPALRGLLSSLK. Positions 93, 119, 120, 158, 166, 168, 197, 198, 199, 226, and 228 each coordinate pyruvate. Thiamine diphosphate contacts are provided by Tyr-119 and Arg-120. Positions 166, 168, 197, 198, 199, and 226 each coordinate thiamine diphosphate. Asp-197 is a binding site for Mg(2+). 2 residues coordinate Mg(2+): Asn-226 and Tyr-228. His-293 contributes to the thiamine diphosphate binding site. Ser-294 and Ser-296 each carry phosphoserine. The residue at position 301 (Ser-301) is a Phosphoserine; by PDK3.

As to quaternary structure, heterotetramer of two PDHA2 and two PDHB subunits. The heterotetramer interacts with DLAT, and is part of the multimeric pyruvate dehydrogenase complex that contains multiple copies of pyruvate dehydrogenase (E1), dihydrolipoamide acetyltransferase (DLAT, E2) and lipoamide dehydrogenase (DLD, E3). These subunits are bound to an inner core composed of about 48 DLAT and 12 PDHX molecules. The cofactor is thiamine diphosphate. Mg(2+) is required as a cofactor. As to expression, testis.

It localises to the mitochondrion matrix. It carries out the reaction N(6)-[(R)-lipoyl]-L-lysyl-[protein] + pyruvate + H(+) = N(6)-[(R)-S(8)-acetyldihydrolipoyl]-L-lysyl-[protein] + CO2. Pyruvate dehydrogenase activity is inhibited by phosphorylation of PDHA2; it is reactivated by dephosphorylation. Its function is as follows. The pyruvate dehydrogenase complex catalyzes the overall conversion of pyruvate to acetyl-CoA and CO(2), and thereby links the glycolytic pathway to the tricarboxylic cycle. The chain is Pyruvate dehydrogenase E1 component subunit alpha, testis-specific form, mitochondrial (Pdha2) from Rattus norvegicus (Rat).